Consider the following 495-residue polypeptide: Heterogeneous nuclear ribonucleoprotein Q (495 aa).

The segment covering M1 to R10 has biased composition (basic and acidic residues). Residues M1–D101 are disordered. Composition is skewed to acidic residues over residues V11–V46 and M67–D101. RRM domains are found at residues S116 to T194, N196 to P278, and K292 to P368. Residues M452–Y495 form a disordered region. Residues D478–R487 are compositionally biased toward basic and acidic residues.

Interacts with LHP1 in the nucleus on a common set of chromatin regions. Predominantly expressed in vascular and meristematic tissues. Expressed throughout development in seedlings, roots, leaves, floral buds and siliques.

It localises to the nucleus. Its subcellular location is the cytoplasm. The protein resides in the microsome. Functionally, transcriptional activator that binds DNA on GAGA-like motif and 5'-(C/G)ACGTG(G/T)C(A/G)-3' consensus motif in the promoters of target genes. Component of ribonucleosomes, which are complexes of at least 20 other different heterogeneous nuclear ribonucleoproteins (hnRNP). hnRNP play an important role in processing of precursor mRNA in the nucleus. Required during flower development and for cell fate determination. Acts both as an antagonist and as a promoter of polycomb LHP1 gene regulation activity, depending of target genes, to regulate the transcription of stress-responsive and flowering genes. May regulate histone H3 trimethylation on lysine 27 (H3K27me3). Recognizes and binds histone H3 tails methylated at 'Lys-4' (H3K4me) and acetylated at 'Lys-9' (H3K9ac), leading to epigenetic activation. When in complex with LHP1, recognizes and binds histone H3 tails methylated at 'Lys-4' (H3K4me) and 'Lys-27' (H3K27me), mostly corresponding to stress-responsive genes. May function as a suppressor of cell-autonomous immune responses involving glucosinolates, salicylic acid (SA) and jasmonic acid (JA) pathways toward pathogenic bacteria and fungi. This is Heterogeneous nuclear ribonucleoprotein Q from Arabidopsis thaliana (Mouse-ear cress).